Here is a 410-residue protein sequence, read N- to C-terminus: D-amino acid dehydrogenase (410 aa).

Glycine 9–glycine 14 is a binding site for FAD.

Belongs to the DadA oxidoreductase family. Requires FAD as cofactor.

It localises to the cell inner membrane. It catalyses the reaction a D-alpha-amino acid + a quinone + H2O = a 2-oxocarboxylate + a quinol + NH4(+). Catalyzes the oxidative deamination of D-amino acids. Has broad substrate specificity; is mostly active on D-proline, and to a lesser extent, on several other D-amino acids such as D-alanine, D-phenylalanine and D-serine. Mediates electron transport from D-proline to coenzyme Q1 in vitro, and is involved in the electron transport chain from D-proline to the c-type cytochrome in vivo. The sequence is that of D-amino acid dehydrogenase from Helicobacter pylori (strain J99 / ATCC 700824) (Campylobacter pylori J99).